The following is a 55-amino-acid chain: MAKAVTVKIRLVSTADTGYFYVTKKNSRTQTEKMVMKKYDPVARKHVEFKEAKIK.

The protein belongs to the bacterial ribosomal protein bL33 family.

The chain is Large ribosomal subunit protein bL33 from Methylorubrum extorquens (strain CM4 / NCIMB 13688) (Methylobacterium extorquens).